The following is a 243-amino-acid chain: uncharacterized protein (243 aa).

The GP-PDE domain occupies 2–240 (TKIFAHRGAS…DFPEKASALL (239 aa)).

This is an uncharacterized protein from Bacillus subtilis (strain 168).